The primary structure comprises 109 residues: Large ribosomal subunit protein eL42 (109 aa).

Residues 23–53 (VSQYKKSKESTHAQGRRRYDMKQSGFGGQTK) form a disordered region. Over residues 28-43 (KSKESTHAQGRRRYDM) the composition is skewed to basic and acidic residues.

Belongs to the eukaryotic ribosomal protein eL42 family.

The protein resides in the cytoplasm. This chain is Large ribosomal subunit protein eL42 (RPL36A), found in Tetrahymena thermophila (strain SB210).